The chain runs to 656 residues: Chaperone protein DnaK (656 aa).

Residues 590-605 are compositionally biased toward gly residues; sequence GGAAGGAAGGAAGGAA. A disordered region spans residues 590–656; the sequence is GGAAGGAAGG…DGQPKPGPAA (67 aa). Residues 606 to 621 are compositionally biased toward low complexity; that stretch reads GDAAGAAGDSTGDAAG. Residues 622 to 635 show a composition bias toward gly residues; it reads AAGGPSEGPAGDAG.

The protein belongs to the heat shock protein 70 family.

Functionally, acts as a chaperone. This chain is Chaperone protein DnaK, found in Cenarchaeum symbiosum (strain A).